Here is a 248-residue protein sequence, read N- to C-terminus: Probable transcriptional regulatory protein RPA1097 (248 aa).

Positions methionine 1–arginine 21 are disordered.

This sequence belongs to the TACO1 family.

It is found in the cytoplasm. This chain is Probable transcriptional regulatory protein RPA1097, found in Rhodopseudomonas palustris (strain ATCC BAA-98 / CGA009).